Consider the following 511-residue polypeptide: Cytochrome P450 monooxygenase esdpI (511 aa).

The helical transmembrane segment at 14–34 threads the bilayer; the sequence is VRAGLAIGVAILAIIVLFPGI. Cys-453 serves as a coordination point for heme.

This sequence belongs to the cytochrome P450 family. Heme serves as cofactor.

It localises to the membrane. It functions in the pathway secondary metabolite biosynthesis; terpenoid biosynthesis. Functionally, cytochrome P450 monooxygenase; part of the cluster that mediates the biosynthesis of shearones, diterpenoid pyrones (DPs) which are structurally diverse meroterpenoids consisting of a diterpene linked by a pyrone, and which may exhibit a range of bioactivities. Whitin the pathway, esdpI takes part in the molecular scaffold modification via the hydroxylation at C-20 and can transform shearone C into shearone G. The molecular scaffold is commonly biosynthesized by a series of enzymes including the non-reducing polyketide synthase (NR-PKS) esdpA that generates an alpha-pyrone; the prenyltransferase esdpC that attaches a geranylgeranyl pyrophosphate (GGPP) produced by the GGPP synthase (GGPPS) esdpD onto the pyrone unit; the FAD-dependent monooxygenase esdpE that converts an olefin on the diterpene unit into an epoxide; and the terpene cyclase esdpB that catalyzes the cyclization reactions to give the molecular backbone shearone A. In the modification steps, esdpF oxidizes the hydroxy group to a ketone at C-3 and esdpG then attaches hydroxy groups at both C-11 and C-12. After that, esdpI hydroxylates at C-20 and esdpH hydroxylates at C-6'. The ether bridge is generated by nucleophilic attack of the hydroxy group at C-20 to the carbonyl carbon at C-3. EsdpH can also functions prior to esdpI. The different combinations of these modification enzymes lead to the production of diverse shearone derivatives, shearone I being the end product of the pathway. The alpha-ketoglutarate-dependent dioxygenase esdpJ seems not to be involved in this pathway. The protein is Cytochrome P450 monooxygenase esdpI of Penicillium shearii (Eupenicillium shearii).